The primary structure comprises 354 residues: Arginase-2, mitochondrial (354 aa).

Residues 1–22 (MSYGSCVSRLLRTRVQSVLKKS) constitute a mitochondrion transit peptide. Residues His-120, Asp-143, His-145, and Asp-147 each contribute to the Mn(2+) site. Substrate is bound by residues 145-149 (HADIN), 156-158 (SGN), and Asp-202. The Mn(2+) site is built by Asp-251 and Asp-253. Positions 265 and 296 each coordinate substrate. A disordered region spans residues 330-354 (GHTVYEQLPPPSSPHESENAERVRI). The span at 344–354 (HESENAERVRI) shows a compositional bias: basic and acidic residues.

It belongs to the arginase family. As to quaternary structure, homotrimer. Mn(2+) is required as a cofactor.

The protein localises to the mitochondrion. The enzyme catalyses L-arginine + H2O = urea + L-ornithine. It participates in nitrogen metabolism; urea cycle; L-ornithine and urea from L-arginine: step 1/1. Functionally, may play a role in the regulation of extra-urea cycle arginine metabolism and also in down-regulation of nitric oxide synthesis. Extrahepatic arginase functions to regulate L-arginine bioavailability to nitric oxid synthase (NOS). Arginine metabolism is a critical regulator of innate and adaptive immune responses. Seems to be involved in negative regulation of the survival capacity of activated T cells. May suppress inflammation-related signaling in asthmatic airway epithelium. May play a role in promoting prenatal immune suppression. Regulates RPS6KB1 signaling, which promotes endothelial cell senescence and inflammation and implicates NOS3/eNOS dysfunction. Can inhibit endothelial autophagy independently of its enzymatic activity implicating mTORC2 signaling. Involved in vascular smooth muscle cell senescence and apoptosis independently of its enzymatic activity. The polypeptide is Arginase-2, mitochondrial (ARG2) (Oryctolagus cuniculus (Rabbit)).